The sequence spans 391 residues: tRNA-specific 2-thiouridylase MnmA (391 aa).

ATP is bound by residues 9 to 16 (GMSGGVDS) and methionine 35. The interaction with target base in tRNA stretch occupies residues 95-97 (NPD). The active-site Nucleophile is cysteine 100. Residues cysteine 100 and cysteine 196 are joined by a disulfide bond. Position 124 (glycine 124) interacts with ATP. The segment at 146-148 (KDQ) is interaction with tRNA. The active-site Cysteine persulfide intermediate is cysteine 196. Positions 308–309 (RY) are interaction with tRNA. Over residues 372–382 (TGQPGQATSTG) the composition is skewed to polar residues. The disordered stretch occupies residues 372-391 (TGQPGQATSTGHAPALAEAR).

The protein belongs to the MnmA/TRMU family.

Its subcellular location is the cytoplasm. The enzyme catalyses S-sulfanyl-L-cysteinyl-[protein] + uridine(34) in tRNA + AH2 + ATP = 2-thiouridine(34) in tRNA + L-cysteinyl-[protein] + A + AMP + diphosphate + H(+). Functionally, catalyzes the 2-thiolation of uridine at the wobble position (U34) of tRNA, leading to the formation of s(2)U34. In Burkholderia cenocepacia (strain ATCC BAA-245 / DSM 16553 / LMG 16656 / NCTC 13227 / J2315 / CF5610) (Burkholderia cepacia (strain J2315)), this protein is tRNA-specific 2-thiouridylase MnmA.